We begin with the raw amino-acid sequence, 208 residues long: Imidazole glycerol phosphate synthase subunit HisH (208 aa).

The Glutamine amidotransferase type-1 domain maps to 1 to 206 (MIVIIDYDTG…KEVTYSCKSS (206 aa)). Cys79 (nucleophile) is an active-site residue. Catalysis depends on residues His181 and Glu183.

Heterodimer of HisH and HisF.

The protein localises to the cytoplasm. The enzyme catalyses 5-[(5-phospho-1-deoxy-D-ribulos-1-ylimino)methylamino]-1-(5-phospho-beta-D-ribosyl)imidazole-4-carboxamide + L-glutamine = D-erythro-1-(imidazol-4-yl)glycerol 3-phosphate + 5-amino-1-(5-phospho-beta-D-ribosyl)imidazole-4-carboxamide + L-glutamate + H(+). The catalysed reaction is L-glutamine + H2O = L-glutamate + NH4(+). It participates in amino-acid biosynthesis; L-histidine biosynthesis; L-histidine from 5-phospho-alpha-D-ribose 1-diphosphate: step 5/9. IGPS catalyzes the conversion of PRFAR and glutamine to IGP, AICAR and glutamate. The HisH subunit catalyzes the hydrolysis of glutamine to glutamate and ammonia as part of the synthesis of IGP and AICAR. The resulting ammonia molecule is channeled to the active site of HisF. In Listeria monocytogenes serotype 4a (strain HCC23), this protein is Imidazole glycerol phosphate synthase subunit HisH.